The sequence spans 293 residues: Ribonuclease P/MRP protein subunit RPP1 (293 aa).

Belongs to the eukaryotic/archaeal RNase P protein component 3 family. Component of nuclear RNase P and RNase MRP complexes. RNase P consists of an RNA moiety and at least 9 protein subunits including POP1, POP3, POP4, POP5, POP6, POP7, POP8, RPP1 and RPR2. RNase MRP complex consists of an RNA moiety and at least 10 protein subunits including POP1, POP3, POP4, POP5, POP6, POP7, POP8, RMP1, RPP1 and SNM1, many of which are shared with the RNase P complex.

The protein resides in the nucleus. It catalyses the reaction Endonucleolytic cleavage of RNA, removing 5'-extranucleotides from tRNA precursor.. Functionally, component of ribonuclease P, a protein complex that generates mature tRNA molecules by cleaving their 5'-ends. Also a component of RNase MRP, which cleaves pre-rRNA sequences. This Saccharomyces cerevisiae (strain ATCC 204508 / S288c) (Baker's yeast) protein is Ribonuclease P/MRP protein subunit RPP1 (RPP1).